A 624-amino-acid polypeptide reads, in one-letter code: Glyco-Gag protein (624 aa).

The Cytoplasmic segment spans residues 1-63 (LGDVPGTSGA…FLPSVWNRSR (63 aa)). Residues 64 to 86 (AARLVCCSIVLCCLCLAVFLYWS) form a helical membrane-spanning segment. Topologically, residues 87 to 624 (ENMGQTVTTP…PQTSLLALDD (538 aa)) are extracellular. N113 carries N-linked (GlcNAc...) asparagine; by host glycosylation. Composition is skewed to pro residues over residues 200-209 (PSLLPEPPLS) and 247-258 (DPPPYRDPGPPP). Disordered regions lie at residues 200–284 (PSLL…ASRL) and 290–309 (LPVADSTTSQAFPLRSGGNG). Residue N478 is glycosylated (N-linked (GlcNAc...) asparagine; by host). 2 stretches are compositionally biased toward basic and acidic residues: residues 520–552 (RETPEEREERIKRETEEKEERRRAEDEQKEKER) and 572–605 (KQDRQGGERRRPQLDKDQCAYCKEKGHWAKDCPK). Residues 520–624 (RETPEEREER…PQTSLLALDD (105 aa)) are disordered.

Post-translationally, glycosylated by host. In terms of processing, cleaved by host near the middle of the molecule, releasing the c-terminal half containing capsid and nucleoprotein domains op GAG.

It is found in the host cell membrane. In terms of biological role, plays a role in viral particle release. Presumably acts by facilitating the fission of the virion bud at the cell surface. May prevent the antiviral activity of murine APOBEC3. The polypeptide is Glyco-Gag protein (Mus musculus (Mouse)).